Consider the following 383-residue polypeptide: Microtubule-associated protein tau (383 aa).

Basic and acidic residues predominate over residues 1-27 (MAEPRQEFDVMEDHAGTYGLGDRKDQE). The tract at residues 1–198 (MAEPRQEFDV…PVPMPDLKNV (198 aa)) is disordered. An N-acetylalanine modification is found at alanine 2. Residues tyrosine 18 and tyrosine 29 each carry the phosphotyrosine modification. Residue lysine 44 forms a Glycyl lysine isopeptide (Lys-Gly) (interchain with G-Cter in ubiquitin) linkage. Threonine 53 bears the Phosphothreonine mark. The segment covering 72-91 (KSKDGTGSDDKKAKGADGKT) has biased composition (basic and acidic residues). At threonine 95 the chain carries Phosphothreonine. Arginine 97 carries the post-translational modification Omega-N-methylarginine. Lysine 105 carries the N6,N6-dimethyllysine; alternate modification. Lysine 105 carries the post-translational modification N6-acetyllysine; alternate. Phosphothreonine is present on residues threonine 111, threonine 117, and threonine 123. The segment covering 116-128 (KTPPAPKTPPSSG) has biased composition (pro residues). Residues serine 127, serine 133, and serine 137 each carry the phosphoserine modification. Residues 129-156 (EPPKSGDRSGYSSPGSPGTPGSRSRTPS) are compositionally biased toward low complexity. Tyrosine 139 bears the Phosphotyrosine mark. Phosphoserine is present on residues serine 140, serine 141, and serine 144. Threonine 147 and threonine 154 each carry phosphothreonine. At serine 156 the chain carries Phosphoserine. Residue threonine 159 is modified to Phosphothreonine. Position 167 is an N6-acetyllysine (lysine 167). Threonine 173 is subject to Phosphothreonine. Residues serine 177 and serine 179 each carry the phosphoserine modification. 4 Tau/MAP repeats span residues 186–216 (QTAP…GGGK), 217–247 (VQII…GGGS), 248–278 (VQIV…GGGQ), and 279–310 (VEVK…GGGN). Lysine 196 is covalently cross-linked (Glycyl lysine isopeptide (Lys-Gly) (interchain with G-Cter in ubiquitin)). Residue lysine 201 is modified to N6-acetyllysine; alternate. At lysine 201 the chain carries N6-methyllysine; alternate. A Glycyl lysine isopeptide (Lys-Gly) (interchain with G-Cter in ubiquitin); alternate cross-link involves residue lysine 201. A Phosphoserine modification is found at serine 204. Residue lysine 209 forms a Glycyl lysine isopeptide (Lys-Gly) (interchain with G-Cter in ubiquitin) linkage. Lysine 223 bears the N6-acetyllysine; alternate mark. Lysine 223 participates in a covalent cross-link: Glycyl lysine isopeptide (Lys-Gly) (interchain with G-Cter in ubiquitin); alternate. Phosphoserine is present on residues serine 227 and serine 231. Lysine 232 is subject to N6-acetyllysine. A disulfide bond links cysteine 233 and cysteine 264. Position 235 is a phosphoserine (serine 235). N6-acetyllysine; alternate is present on lysine 240. Lysine 240 is covalently cross-linked (Glycyl lysine isopeptide (Lys-Gly) (interchain with G-Cter in ubiquitin); alternate). The residue at position 247 (serine 247) is a Phosphoserine. Lysine 253 is subject to N6,N6-dimethyllysine; alternate. An N6-acetyllysine; alternate mark is found at lysine 253, lysine 259, and lysine 263. Residues lysine 253, lysine 259, and lysine 263 each participate in a glycyl lysine isopeptide (Lys-Gly) (interchain with G-Cter in ubiquitin); alternate cross-link. Serine 266 is subject to Phosphoserine. N6-acetyllysine; alternate is present on residues lysine 273, lysine 285, and lysine 289. Glycyl lysine isopeptide (Lys-Gly) (interchain with G-Cter in ubiquitin); alternate cross-links involve residues lysine 273, lysine 285, and lysine 289. The residue at position 291 (arginine 291) is an Omega-N-methylarginine. Serine 294 carries the phosphoserine modification. Lysine 295 participates in a covalent cross-link: Glycyl lysine isopeptide (Lys-Gly) (interchain with G-Cter in ubiquitin). Serine 298 carries the phosphoserine modification. Lysine 311 carries the N6-acetyllysine; alternate modification. Residue lysine 311 forms a Glycyl lysine isopeptide (Lys-Gly) (interchain with G-Cter in ubiquitin); alternate linkage. A Glycyl lysine isopeptide (Lys-Gly) (interchain with G-Cter in ubiquitin) cross-link involves residue lysine 317. Lysine 327 carries the N6-acetyllysine; alternate modification. Residue lysine 327 forms a Glycyl lysine isopeptide (Lys-Gly) (interchain with G-Cter in ubiquitin); alternate linkage. Tyrosine 336 carries the post-translational modification Phosphotyrosine. 2 positions are modified to phosphoserine: serine 338 and serine 342. The segment at 340–359 (VVSGDTSPRHLSNVSSTGSI) is disordered. Over residues 343 to 358 (GDTSPRHLSNVSSTGS) the composition is skewed to polar residues. Position 345 is a phosphothreonine (threonine 345). 4 positions are modified to phosphoserine: serine 346, serine 351, serine 358, and serine 364. At threonine 369 the chain carries Phosphothreonine.

In terms of assembly, interacts with MARK1, MARK2, MARK3 and MARK4. Interacts with SQSTM1 when polyubiquitinated. Interacts with PSMC2 through SQSTM1. Interacts with FKBP4. Binds to CSNK1D. Interacts with SGK1. Interacts with PIN1. Interacts with LRRK2. Interacts with LRP1, leading to endocytosis; this interaction is reduced in the presence of LRPAP1/RAP. Polyubiquitinated. Requires functional TRAF6 and may provoke SQSTM1-dependent degradation by the proteasome. In terms of processing, phosphorylation at various serine and threonine residues in S-P or T-P motifs by proline-directed protein kinases (PDPK1, CDK1, CDK5, GSK3, MAPK) (a few sites per protein in interphase, more in mitosis), and at serine residues in K-X-G-S motifs by MAP/microtubule affinity-regulating kinase (MARK1, MARK2, MARK3 or MARK4), causing detachment from microtubules, and their disassembly. Phosphorylation at Ser-204 by BRSK1 and BRSK2 in neurons affects ability to bind microtubules and plays a role in neuron polarization. Phosphorylated by PHK. Dephosphorylation at several serine and threonine residues by the serine/threonine phosphatase PPP5C. As to expression, expressed in neurons.

The protein resides in the cytoplasm. It is found in the cytosol. It localises to the cell membrane. Its subcellular location is the cytoskeleton. The protein localises to the cell projection. The protein resides in the axon. It is found in the dendrite. Functionally, promotes microtubule assembly and stability, and might be involved in the establishment and maintenance of neuronal polarity. The C-terminus binds axonal microtubules while the N-terminus binds neural plasma membrane components, suggesting that tau functions as a linker protein between both. Axonal polarity is predetermined by tau localization (in the neuronal cell) in the domain of the cell body defined by the centrosome. This Papio hamadryas (Hamadryas baboon) protein is Microtubule-associated protein tau (MAPT).